The following is a 126-amino-acid chain: MNLRATRVGEQMKKELSDIIGRKLKDPRIGFVTVTDVRVTGDLQQAKVYISVLGDEEQRQNTLKGLEKAKGFIRSEIGQRIRLRKTPEIFFEIDESIEYGNRIEQLIRQISTEHEGGKKEEENKEE.

Belongs to the RbfA family. As to quaternary structure, monomer. Binds 30S ribosomal subunits, but not 50S ribosomal subunits or 70S ribosomes.

The protein resides in the cytoplasm. Its function is as follows. One of several proteins that assist in the late maturation steps of the functional core of the 30S ribosomal subunit. Associates with free 30S ribosomal subunits (but not with 30S subunits that are part of 70S ribosomes or polysomes). Required for efficient processing of 16S rRNA. May interact with the 5'-terminal helix region of 16S rRNA. The chain is Ribosome-binding factor A from Geobacillus sp. (strain WCH70).